Consider the following 576-residue polypeptide: MQLLAQTCEAIAATSKKTEKIAIVATYLQSRTVPEAALSTLFLSGRTFAAHEERTLQVGGSILWRVVGELSGASEAKMTAAYKRHGDLGDATLGVLRGVAPEESTLTLKEVDYMFQQIAAVSGPAAKSRLIVTLLARATAPEAKYLVKFITGELRIGLKESQVEEAIAKAYGRELAEVRRANMLVGDIGETLVLAAHDKLATARMRLFHPMGFMLATPAESANEAFAEFEHAIVEDKYDGIRAQAHISRDKVRIFSRTLDDITDSFPELIPALKAIEHEVILDGEILAWRCGQALAFSELQKRLGRKNVSAAMQREVPVSYVTFDLLYAKGQLVIDRPLQERAAMLDGIFSEGAPRLVNVDPHGQASLMFAEVTPEQRVLRAPQARADSPEELDRLFAAAQERGNEGLMIKDIHSAYAVGRRGKSWLKLKRELAMLDVVVTAVELGHGKRAGILSDYTFAVRGGEELLNIGKAYSGLTDKEIAEMDEWFRAHTLVDHGFVREVEPKIVIEVAFNAVMKSDRHASGFALRFPRILRIRDDKGGEEIDTLERAEEIYRSQFHQRTRRIHRGDTKAQSS.

Position 235 (Glu235) interacts with ATP. Catalysis depends on Lys237, which acts as the N6-AMP-lysine intermediate. ATP is bound by residues Arg242, Arg257, Glu285, Phe324, Arg422, and Lys428.

This sequence belongs to the ATP-dependent DNA ligase family. Mg(2+) serves as cofactor.

The enzyme catalyses ATP + (deoxyribonucleotide)n-3'-hydroxyl + 5'-phospho-(deoxyribonucleotide)m = (deoxyribonucleotide)n+m + AMP + diphosphate.. Its function is as follows. DNA ligase that seals nicks in double-stranded DNA during DNA replication, DNA recombination and DNA repair. The protein is Probable DNA ligase of Koribacter versatilis (strain Ellin345).